Reading from the N-terminus, the 835-residue chain is Serine/threonine-protein kinase TNNI3K (835 aa).

The stretch at 21–51 (SESYVITIERLEDDLQIKEKELTELRNIFGS) forms a coiled coil. ANK repeat units follow at residues 66 to 96 (NGLSLLHLCCICGGKKSHIRTLMLKGLRPSR), 100 to 129 (NGFTALHLAVYKDNAELITSLLHSGADIQQ), 133 to 162 (GGLTALHIATIAGHLEAADVLLQHGANVNI), 166 to 195 (VFFTPLHIAAYYGHEQVTRLLLKFGADVNV), 199 to 228 (VGDRPLHLASAKGFLNIAKLLMEEGSKADV), 234 to 263 (EDHVPLHFCSRFGHHDIVKYLLQSDLEVQP), 269 to 298 (YGDTPLHLACYNGKFEVAKEIIQISGTESL), 304 to 335 (FSETAFHSACTYGKSIDLVKFLLDQNVININH), 339 to 368 (DGHTGLHSACYHGHIRLVQFLLDNGADMNL), and 381 to 410 (DEQTCLMWAYEKGHDAIVTLLKHYKRPQDE). Positions 463-723 (IEFHEIIGSG…EVVMKLEECL (261 aa)) constitute a Protein kinase domain. Residues 469 to 477 (IGSGSFGKV) and Lys490 each bind ATP. Asp588 serves as the catalytic Proton acceptor. Low complexity predominate over residues 732-746 (ASSNSSGSLSPSSSS). The tract at residues 732 to 751 (ASSNSSGSLSPSSSSDCLVN) is disordered.

It belongs to the protein kinase superfamily. TKL Ser/Thr protein kinase family. MAP kinase kinase kinase subfamily. As to quaternary structure, interacts with TNNI3, ACTC1, ACTA1, MYBPC3, AIP, FABP3 and HADHB. Requires Mg(2+) as cofactor. Post-translationally, autophosphorylated. In terms of tissue distribution, highly expressed in both adult and fetal heart.

The protein localises to the nucleus. It is found in the cytoplasm. The catalysed reaction is L-seryl-[protein] + ATP = O-phospho-L-seryl-[protein] + ADP + H(+). It catalyses the reaction L-threonyl-[protein] + ATP = O-phospho-L-threonyl-[protein] + ADP + H(+). May play a role in cardiac physiology. This chain is Serine/threonine-protein kinase TNNI3K, found in Homo sapiens (Human).